We begin with the raw amino-acid sequence, 127 residues long: Fluoride-specific ion channel FluC (127 aa).

Helical transmembrane passes span 4–24 (LLLAVFIGGGTGSVARWLLSM), 35–55 (LGTLTANLIGAFIIGMGFAWF), 71–91 (TGFCGGLTTFSTFSAEVVFLL), and 103–123 (VFVNLLGSFAMTALAFWLFSA). Positions 75 and 78 each coordinate Na(+).

It belongs to the fluoride channel Fluc/FEX (TC 1.A.43) family.

It is found in the cell inner membrane. It carries out the reaction fluoride(in) = fluoride(out). With respect to regulation, na(+) is not transported, but it plays an essential structural role and its presence is essential for fluoride channel function. Its function is as follows. Fluoride-specific ion channel. Important for reducing fluoride concentration in the cell, thus reducing its toxicity. The sequence is that of Fluoride-specific ion channel FluC from Escherichia coli O7:K1 (strain IAI39 / ExPEC).